The primary structure comprises 399 residues: 1-deoxy-D-xylulose 5-phosphate reductoisomerase (399 aa).

NADPH is bound by residues Thr-13, Gly-14, Ser-15, Ile-16, and Asn-127. Position 128 (Lys-128) interacts with 1-deoxy-D-xylulose 5-phosphate. Glu-129 provides a ligand contact to NADPH. Mn(2+) is bound at residue Asp-153. The 1-deoxy-D-xylulose 5-phosphate site is built by Ser-154, Glu-155, Ser-187, and His-210. Glu-155 serves as a coordination point for Mn(2+). Gly-216 lines the NADPH pocket. Residues Ser-223, Asn-228, Lys-229, and Glu-232 each coordinate 1-deoxy-D-xylulose 5-phosphate. Mn(2+) is bound at residue Glu-232.

The protein belongs to the DXR family. The cofactor is Mg(2+). Requires Mn(2+) as cofactor.

The catalysed reaction is 2-C-methyl-D-erythritol 4-phosphate + NADP(+) = 1-deoxy-D-xylulose 5-phosphate + NADPH + H(+). Its pathway is isoprenoid biosynthesis; isopentenyl diphosphate biosynthesis via DXP pathway; isopentenyl diphosphate from 1-deoxy-D-xylulose 5-phosphate: step 1/6. Its function is as follows. Catalyzes the NADPH-dependent rearrangement and reduction of 1-deoxy-D-xylulose-5-phosphate (DXP) to 2-C-methyl-D-erythritol 4-phosphate (MEP). The sequence is that of 1-deoxy-D-xylulose 5-phosphate reductoisomerase from Bordetella avium (strain 197N).